A 398-amino-acid chain; its full sequence is Ethanolaminephosphotransferase 1 (398 aa).

At Ala2 the chain carries N-acetylalanine. A run of 10 helical transmembrane segments spans residues 47–69 (WLAP…LLLT), 84–103 (HVPD…AYTL), 123–145 (LFDH…SIFG), 150–172 (GVSV…LSHW), 179–201 (VLFL…IVTA), 221–243 (LFTA…LNFF), 256–278 (VYEA…VWIL), 291–310 (IFYF…LIVC), 319–341 (TLNW…AATS), and 345–367 (SALL…VQVV). A non-standard amino acid (selenocysteine) is located at residue Sec388.

It belongs to the CDP-alcohol phosphatidyltransferase class-I family. The cofactor is Mg(2+). Mn(2+) serves as cofactor.

Its subcellular location is the endoplasmic reticulum membrane. The enzyme catalyses CDP-ethanolamine + a 1,2-diacyl-sn-glycerol = a 1,2-diacyl-sn-glycero-3-phosphoethanolamine + CMP + H(+). The catalysed reaction is 1-O-alkyl-2-acyl-sn-glycerol + CDP-ethanolamine = a 1-O-alkyl-2-acyl-sn-glycero-3-phosphoethanolamine + CMP + H(+). Its pathway is phospholipid metabolism; phosphatidylethanolamine biosynthesis; phosphatidylethanolamine from ethanolamine: step 3/3. In terms of biological role, ethanolaminephosphotransferase that catalyzes the transfer of phosphoethanolamine (PE) from CDP-ethanolamine to lipid acceptors, the final step in the synthesis of PE via the 'Kennedy' pathway. PE is the second most abundant phospholipid of membranes in mammals and is involved in various membrane-related cellular processes. The enzyme is critical for the synthesis of several PE species and also catalyzes the synthesis of plasmanyl-PE, a lipid required for proper myelination and neurodevelopment, from 1-alkyl-2-acylglycerol. This Mus musculus (Mouse) protein is Ethanolaminephosphotransferase 1.